We begin with the raw amino-acid sequence, 354 residues long: Protein-arginine kinase (354 aa).

Positions 24-254 (IVLSSRIRLA…QQIIQQEKMA (231 aa)) constitute a Phosphagen kinase C-terminal domain. ATP is bound by residues 27-31 (SSRIR), His-92, Arg-125, 176-180 (RASVM), and 207-212 (RGIYGE). Residues 337–342 (RDYRRA) carry the RDXXRA motif of the pArg binding pocket involved in allosteric regulation motif.

It belongs to the ATP:guanido phosphotransferase family.

It catalyses the reaction L-arginyl-[protein] + ATP = N(omega)-phospho-L-arginyl-[protein] + ADP + H(+). Its activity is regulated as follows. Appears to be allosterically activated by the binding of pArg-containing polypeptides to the pArg-binding pocket localized in the C-terminal domain of McsB. Functionally, catalyzes the specific phosphorylation of arginine residues in a large number of proteins. Is part of the bacterial stress response system. Protein arginine phosphorylation has a physiologically important role and is involved in the regulation of many critical cellular processes, such as protein homeostasis, motility, competence, and stringent and stress responses, by regulating gene expression and protein activity. The polypeptide is Protein-arginine kinase (Bacillus anthracis (strain A0248)).